Here is a 196-residue protein sequence, read N- to C-terminus: uncharacterized protein (196 aa).

This is an uncharacterized protein from Acanthamoeba polyphaga mimivirus (APMV).